The following is a 253-amino-acid chain: ATP synthase subunit a (253 aa).

6 helical membrane-spanning segments follow: residues 30–50 (FTNA…VLLA), 88–108 (FFPF…IGLV), 118–138 (IAVT…YGLI), 144–164 (FLGI…MIMI), 184–204 (MLAG…LLGA), and 211–231 (VAPL…LVAF).

This sequence belongs to the ATPase A chain family. In terms of assembly, F-type ATPases have 2 components, CF(1) - the catalytic core - and CF(0) - the membrane proton channel. CF(1) has five subunits: alpha(3), beta(3), gamma(1), delta(1), epsilon(1). CF(0) has three main subunits: a(1), b(2) and c(9-12). The alpha and beta chains form an alternating ring which encloses part of the gamma chain. CF(1) is attached to CF(0) by a central stalk formed by the gamma and epsilon chains, while a peripheral stalk is formed by the delta and b chains.

The protein localises to the cell inner membrane. Its function is as follows. Key component of the proton channel; it plays a direct role in the translocation of protons across the membrane. This is ATP synthase subunit a from Beijerinckia indica subsp. indica (strain ATCC 9039 / DSM 1715 / NCIMB 8712).